Here is an 88-residue protein sequence, read N- to C-terminus: Beta-defensin 115 (88 aa).

Residues 1–27 (MLPDHFSPLSGDIKLSVLALVVLVVLA) form the signal peptide. 3 disulfides stabilise this stretch: C38–C65, C45–C59, and C49–C66.

It belongs to the beta-defensin family.

Its subcellular location is the secreted. Its function is as follows. Has antibacterial activity. This is Beta-defensin 115 (DEFB115) from Homo sapiens (Human).